A 134-amino-acid polypeptide reads, in one-letter code: Large ribosomal subunit protein uL16c (134 aa).

The tract at residues 1-22 (MLSPKRTRFRKQHRGRMKGISH) is disordered.

This sequence belongs to the universal ribosomal protein uL16 family. As to quaternary structure, part of the 50S ribosomal subunit.

The protein localises to the plastid. It localises to the chloroplast. The polypeptide is Large ribosomal subunit protein uL16c (Nicotiana tomentosiformis (Tobacco)).